The following is a 248-amino-acid chain: MKYTLVGNGRMGQQVLGAIEASGEHTVHDILDVDAEISEQSFSGSDVIVDFTVRDAFLVNLPAMLASRVPVVVGTTGWDREMSIVRSMVEKSGSSLLYSANFSLGVNVFLRTVREAARMIAPFEDFDIAFSEQHHTAKADFPSGTALRAAEMILEANSRKKSIISQLSTDRKIEPDELQVAAIRLGSVFGQHAAAINSESDDIVVSHTARNRKGFAGGAVQAGKWLAQKHTEQPGFYTMDDFLDEVLG.

Residues 74–76 and 99–102 contribute to the NAD(+) site; these read GTT and SANF. The active-site Proton donor/acceptor is the His-134. His-135 is a binding site for (S)-2,3,4,5-tetrahydrodipicolinate. The Proton donor role is filled by Lys-138. 144-145 is a binding site for (S)-2,3,4,5-tetrahydrodipicolinate; sequence GT.

It belongs to the DapB family.

Its subcellular location is the cytoplasm. The catalysed reaction is (S)-2,3,4,5-tetrahydrodipicolinate + NAD(+) + H2O = (2S,4S)-4-hydroxy-2,3,4,5-tetrahydrodipicolinate + NADH + H(+). It carries out the reaction (S)-2,3,4,5-tetrahydrodipicolinate + NADP(+) + H2O = (2S,4S)-4-hydroxy-2,3,4,5-tetrahydrodipicolinate + NADPH + H(+). Its pathway is amino-acid biosynthesis; L-lysine biosynthesis via DAP pathway; (S)-tetrahydrodipicolinate from L-aspartate: step 4/4. Functionally, catalyzes the conversion of 4-hydroxy-tetrahydrodipicolinate (HTPA) to tetrahydrodipicolinate. This chain is 4-hydroxy-tetrahydrodipicolinate reductase, found in Chlorobium phaeobacteroides (strain BS1).